The following is a 606-amino-acid chain: Elongation factor 4 (606 aa).

A tr-type G domain is found at 11–193 (PHIRNFSIIA…RLVRDVPPPK (183 aa)). GTP is bound by residues 23–28 (DHGKST) and 140–143 (NKMD).

It belongs to the TRAFAC class translation factor GTPase superfamily. Classic translation factor GTPase family. LepA subfamily.

The protein resides in the cell inner membrane. It carries out the reaction GTP + H2O = GDP + phosphate + H(+). Functionally, required for accurate and efficient protein synthesis under certain stress conditions. May act as a fidelity factor of the translation reaction, by catalyzing a one-codon backward translocation of tRNAs on improperly translocated ribosomes. Back-translocation proceeds from a post-translocation (POST) complex to a pre-translocation (PRE) complex, thus giving elongation factor G a second chance to translocate the tRNAs correctly. Binds to ribosomes in a GTP-dependent manner. This chain is Elongation factor 4, found in Chromohalobacter salexigens (strain ATCC BAA-138 / DSM 3043 / CIP 106854 / NCIMB 13768 / 1H11).